The following is a 298-amino-acid chain: Mitochondrial 2-oxodicarboxylate carrier (298 aa).

Solcar repeat units follow at residues 10-99 (HETC…YKKF), 106-195 (SPGL…VKDN), and 204-293 (LEFL…TYAW). The next 6 membrane-spanning stretches (helical) occupy residues 16–36 (VAAG…LDVV), 69–88 (FGFY…KRAV), 112–132 (PIAG…FEVV), 166–186 (GLNK…MTYF), 204–224 (LEFL…SVFN), and 276–296 (LGPG…WLQE).

It belongs to the mitochondrial carrier (TC 2.A.29) family. In terms of tissue distribution, widely expressed.

It is found in the mitochondrion inner membrane. It carries out the reaction 2-oxoadipate(in) + 2-oxoglutarate(out) = 2-oxoadipate(out) + 2-oxoglutarate(in). The enzyme catalyses hexanedioate(in) + 2-oxoglutarate(out) = hexanedioate(out) + 2-oxoglutarate(in). It catalyses the reaction L-2-aminoadipate(in) + 2-oxoglutarate(out) = L-2-aminoadipate(out) + 2-oxoglutarate(in). The catalysed reaction is glutarate(in) + 2-oxoglutarate(out) = glutarate(out) + 2-oxoglutarate(in). It carries out the reaction 2-oxoheptanedioate(in) + 2-oxoglutarate(out) = 2-oxoheptanedioate(out) + 2-oxoglutarate(in). The enzyme catalyses heptanedioate(in) + 2-oxoglutarate(out) = heptanedioate(out) + 2-oxoglutarate(in). It catalyses the reaction citrate(in) + 2-oxoglutarate(out) = citrate(out) + 2-oxoglutarate(in). In terms of biological role, transports dicarboxylates across the inner membranes of mitochondria by a counter-exchange mechanism. Can transport 2-oxoadipate (2-oxohexanedioate), 2-oxoglutarate, adipate (hexanedioate), glutarate, and to a lesser extent, pimelate (heptanedioate), 2-oxopimelate (2-oxoheptanedioate), 2-aminoadipate (2-aminohexanedioate), oxaloacetate, and citrate. Plays a central role in catabolism of lysine, hydroxylysine, and tryptophan, by transporting common metabolite intermediates (such as 2-oxoadipate) into the mitochondria, where it is converted into acetyl-CoA and can enter the citric acid (TCA) cycle. The sequence is that of Mitochondrial 2-oxodicarboxylate carrier (Slc25a21) from Rattus norvegicus (Rat).